Here is an 83-residue protein sequence, read N- to C-terminus: Putative membrane protein insertion efficiency factor (83 aa).

The disordered stretch occupies residues 63–83; the sequence is GGNDPVPDHFSLRRNKTDISD. Residues 68–83 are compositionally biased toward basic and acidic residues; it reads VPDHFSLRRNKTDISD.

This sequence belongs to the UPF0161 family.

It localises to the cell membrane. Could be involved in insertion of integral membrane proteins into the membrane. This is Putative membrane protein insertion efficiency factor from Streptococcus agalactiae serotype III (strain NEM316).